A 154-amino-acid chain; its full sequence is MHSSLLWLGAVVALLAVNNVTAVSTEANGQVALSTSKGQLAGERAEEENSIVRSLRAVETSEDEEERDLLGLFAKSKLKKMMKSESFKLKRFGEWDDFTVGYIREKLKNKYPDLLLNYLNVYKKAGNEIVRHANNPNKVTFSNKVRARIYKTNS.

The signal sequence occupies residues 1-22; it reads MHSSLLWLGAVVALLAVNNVTA. The short motif at 53-67 is the RxLR-dEER element; the sequence is RSLRAVETSEDEEER. A short sequence motif (PP1c-binding motif) is located at residue lysine 138.

The protein belongs to the RxLR effector family. As to quaternary structure, interacts with the potato PP1c family proteins PP1c-1, PP1c-2 and PP1c-3.

The protein resides in the secreted. It is found in the host nucleus. Its subcellular location is the host nucleoplasm. The protein localises to the host nucleolus. In terms of biological role, effector that interacts with isoforms of host protein phosphatase type 1c (PP1c), mimicking a regulatory subunit and causing their re-localization within the host nucleus. The holoenzymes formed with PP1c isoforms act to promote late blight by attenuating jasmonic acid (JA)- and salicylic acid (SA)-mediated transcriptional responses of the host plant. This Phytophthora infestans (strain T30-4) (Potato late blight agent) protein is RxLR effector protein PexRD24.